Consider the following 465-residue polypeptide: Pancreatic triacylglycerol lipase (465 aa).

The first 16 residues, 1–16, serve as a signal peptide directing secretion; sequence MLLLWILSLFLETVAG. Intrachain disulfides connect C20/C26 and C107/C118. S169 serves as the catalytic Nucleophile. D193 serves as the catalytic Charge relay system. 4 residues coordinate Ca(2+): E204, R207, D209, and D212. C254 and C278 form a disulfide bridge. H280 serves as the catalytic Charge relay system. 2 disulfide bridges follow: C302–C313 and C316–C321. 3 N-linked (GlcNAc...) asparagine glycosylation sites follow: N351, N398, and N425. The PLAT domain occupies 355–465; sequence WRYRIAVTLS…EEVLLTLQPC (111 aa). An intrachain disulfide couples C449 to C465.

This sequence belongs to the AB hydrolase superfamily. Lipase family. In terms of assembly, forms a 1:1 stoichiometric complex with (pro)colipase/CLPS.

The protein localises to the secreted. It catalyses the reaction a triacylglycerol + H2O = a diacylglycerol + a fatty acid + H(+). It carries out the reaction 1,2,3-tributanoylglycerol + H2O = dibutanoylglycerol + butanoate + H(+). The catalysed reaction is 1,2,3-tri-(9Z-octadecenoyl)-glycerol + H2O = di-(9Z)-octadecenoylglycerol + (9Z)-octadecenoate + H(+). The enzyme catalyses all-trans-retinyl hexadecanoate + H2O = all-trans-retinol + hexadecanoate + H(+). It catalyses the reaction 1,2-di-(9Z-octadecenoyl)-glycerol + H2O = (9Z-octadecenoyl)-glycerol + (9Z)-octadecenoate + H(+). Inhibited by bile salts, is reactivated by (pro)colipase/CLPS. Functionally, plays an important role in fat metabolism. It preferentially splits the esters of long-chain fatty acids at positions 1 and 3, producing mainly 2-monoacylglycerol and free fatty acids, and shows considerably higher activity against insoluble emulsified substrates than against soluble ones. This is Pancreatic triacylglycerol lipase (PNLIP) from Cavia porcellus (Guinea pig).